Consider the following 65-residue polypeptide: Large ribosomal subunit protein bL32 (65 aa).

Over residues 1–19 (MAVQKSRKTPSKRGMRRSH) the composition is skewed to basic residues. The segment at 1 to 32 (MAVQKSRKTPSKRGMRRSHNALTNPTLSEDQE) is disordered.

This sequence belongs to the bacterial ribosomal protein bL32 family.

This chain is Large ribosomal subunit protein bL32, found in Ruthia magnifica subsp. Calyptogena magnifica.